The following is an 813-amino-acid chain: Protein SBE22 (813 aa).

3 disordered regions span residues Met-1–Ala-66, Glu-107–Gly-240, and Gln-331–Ser-359. The segment covering Arg-56–Ala-66 has biased composition (basic and acidic residues). Over residues Glu-107–Ser-121 the composition is skewed to low complexity. The span at Ser-127–Val-138 shows a compositional bias: basic and acidic residues. Composition is skewed to polar residues over residues Asp-139 to Ser-160, Val-169 to Met-200, and Lys-214 to Val-234.

The protein belongs to the SBE2 family.

It localises to the cytoplasm. The protein resides in the golgi apparatus. Its function is as follows. With SBE2, is involved in cell wall integrity and polarity processes like bud growth. This Candida glabrata (strain ATCC 2001 / BCRC 20586 / JCM 3761 / NBRC 0622 / NRRL Y-65 / CBS 138) (Yeast) protein is Protein SBE22 (SBE22).